We begin with the raw amino-acid sequence, 327 residues long: Phenylalanine--tRNA ligase alpha subunit (327 aa).

Residue Glu252 coordinates Mg(2+).

Belongs to the class-II aminoacyl-tRNA synthetase family. Phe-tRNA synthetase alpha subunit type 1 subfamily. Tetramer of two alpha and two beta subunits. It depends on Mg(2+) as a cofactor.

The protein localises to the cytoplasm. It catalyses the reaction tRNA(Phe) + L-phenylalanine + ATP = L-phenylalanyl-tRNA(Phe) + AMP + diphosphate + H(+). This is Phenylalanine--tRNA ligase alpha subunit from Aeromonas hydrophila subsp. hydrophila (strain ATCC 7966 / DSM 30187 / BCRC 13018 / CCUG 14551 / JCM 1027 / KCTC 2358 / NCIMB 9240 / NCTC 8049).